Here is a 600-residue protein sequence, read N- to C-terminus: Methionine--tRNA ligase (600 aa).

The 'HIGH' region signature appears at 12-22 (PYANGPRHIGH). 4 residues coordinate Zn(2+): Cys-144, Cys-147, Cys-157, and Cys-160. A 'KMSKS' region motif is present at residues 351-355 (KFSSS). Ser-354 is a binding site for ATP.

It belongs to the class-I aminoacyl-tRNA synthetase family. MetG type 1 subfamily. As to quaternary structure, monomer. It depends on Zn(2+) as a cofactor.

The protein resides in the cytoplasm. The catalysed reaction is tRNA(Met) + L-methionine + ATP = L-methionyl-tRNA(Met) + AMP + diphosphate. Functionally, is required not only for elongation of protein synthesis but also for the initiation of all mRNA translation through initiator tRNA(fMet) aminoacylation. This chain is Methionine--tRNA ligase, found in Chloroflexus aurantiacus (strain ATCC 29364 / DSM 637 / Y-400-fl).